An 87-amino-acid chain; its full sequence is Small ribosomal subunit protein uS17 (87 aa).

This sequence belongs to the universal ribosomal protein uS17 family. Part of the 30S ribosomal subunit.

One of the primary rRNA binding proteins, it binds specifically to the 5'-end of 16S ribosomal RNA. The chain is Small ribosomal subunit protein uS17 from Alcanivorax borkumensis (strain ATCC 700651 / DSM 11573 / NCIMB 13689 / SK2).